Consider the following 420-residue polypeptide: UPF0229 protein LPC_3097 (420 aa).

The interval 83-107 is disordered; it reads IAGDRIKRPGGGAGGAGGNASDSGE. Gly residues predominate over residues 91–100; it reads PGGGAGGAGG.

It belongs to the UPF0229 family.

The protein is UPF0229 protein LPC_3097 of Legionella pneumophila (strain Corby).